Consider the following 147-residue polypeptide: Myoglobin (147 aa).

In terms of domain architecture, Globin spans 2-141 (ADFDAVLKCW…VIADLEANYK (140 aa)). His60 contributes to the nitrite binding site. Position 60 (His60) interacts with O2. A heme b-binding site is contributed by His89.

The protein belongs to the globin family. In terms of assembly, monomeric.

The protein resides in the cytoplasm. The protein localises to the sarcoplasm. The enzyme catalyses Fe(III)-heme b-[protein] + nitric oxide + H2O = Fe(II)-heme b-[protein] + nitrite + 2 H(+). It carries out the reaction H2O2 + AH2 = A + 2 H2O. Its function is as follows. Monomeric heme protein which primary function is to store oxygen and facilitate its diffusion within muscle tissues. Reversibly binds oxygen through a pentacoordinated heme iron and enables its timely and efficient release as needed during periods of heightened demand. Depending on the oxidative conditions of tissues and cells, and in addition to its ability to bind oxygen, it also has a nitrite reductase activity whereby it regulates the production of bioactive nitric oxide. Under stress conditions, like hypoxia and anoxia, it also protects cells against reactive oxygen species thanks to its pseudoperoxidase activity. The sequence is that of Myoglobin (mb) from Auxis rochei (Bullet tuna).